A 227-amino-acid chain; its full sequence is tRNA (guanine-N(1)-)-methyltransferase (227 aa).

S-adenosyl-L-methionine-binding positions include glycine 112 and leucine 132–leucine 137.

It belongs to the RNA methyltransferase TrmD family. As to quaternary structure, homodimer.

It is found in the cytoplasm. It catalyses the reaction guanosine(37) in tRNA + S-adenosyl-L-methionine = N(1)-methylguanosine(37) in tRNA + S-adenosyl-L-homocysteine + H(+). Specifically methylates guanosine-37 in various tRNAs. This chain is tRNA (guanine-N(1)-)-methyltransferase, found in Gloeobacter violaceus (strain ATCC 29082 / PCC 7421).